A 526-amino-acid polypeptide reads, in one-letter code: Vang-like protein 1 (526 aa).

The segment covering 1-15 (MDTESTYSGYSYYSS) has biased composition (low complexity). Positions 1-87 (MDTESTYSGY…TTAITGTSEH (87 aa)) are disordered. Residues 1–114 (MDTESTYSGY…VGLDCKRYLG (114 aa)) are Cytoplasmic-facing. The segment covering 75-87 (GETTTAITGTSEH) has biased composition (polar residues). Residues serine 88 and serine 90 each carry the phosphoserine modification. The helical transmembrane segment at 115-135 (LTVASFLGLLVFLTPIAFILL) threads the bilayer. The Extracellular portion of the chain corresponds to 136-153 (PQILWREELKPCGAICEG). The helical transmembrane segment at 154–174 (LLISVSFKLLILLIGTWALFF) threads the bilayer. Residues 175–184 (RKQRADVPRV) lie on the Cytoplasmic side of the membrane. The helical transmembrane segment at 185–205 (FVFRALLLVLIFLFVVSYWLF) threads the bilayer. The Extracellular segment spans residues 206 to 224 (YGVRILDSRDQNYKDIVQY). Residues 225–245 (AVSLVDALLFIHYLAIVLLEL) traverse the membrane as a helical segment. At 246–526 (RQLQPMFTLQ…VLRLQSETSV (281 aa)) the chain is on the cytoplasmic side.

Belongs to the Vang family. Heterodimer with Vangl2. Interacts through its C-terminal region with the N-terminal half of DVL1, DVL2 and DVL3. The PDZ domain of DVL1, DVL2 and DVL3 is required for the interaction.

The protein localises to the cell membrane. The sequence is that of Vang-like protein 1 (Vangl1) from Mus musculus (Mouse).